The chain runs to 147 residues: MPPTREELVSTALNFIAQFAKLDVDSVLSFLSPNCTLRSFPSSLGKPALQTKEESKADFQGLKDFFQNFQLRVKDGSEPVVDEPARRVVLHIEGKGDSLVGRFETEYIYILRMNEEGTMVEDFFQFADSATRDAWGKKIEAHFSARN.

Belongs to the trt14 isomerase family. In terms of assembly, homodimer.

It participates in secondary metabolite biosynthesis; terpenoid biosynthesis. Functionally, part of the gene cluster that mediates the biosynthesis of calidodehydroaustin, a fungal meroterpenoid. The first step of the pathway is the synthesis of 3,5-dimethylorsellinic acid by the polyketide synthase ausA. 3,5-dimethylorsellinic acid is then prenylated by the polyprenyl transferase ausN. Further epoxidation by the FAD-dependent monooxygenase ausM and cyclization by the probable terpene cyclase ausL lead to the formation of protoaustinoid A. Protoaustinoid A is then oxidized to spiro-lactone preaustinoid A3 by the combined action of the FAD-binding monooxygenases ausB and ausC, and the dioxygenase ausE. Acid-catalyzed keto-rearrangement and ring contraction of the tetraketide portion of preaustinoid A3 by ausJ lead to the formation of preaustinoid A4. The aldo-keto reductase ausK, with the help of ausH, is involved in the next step by transforming preaustinoid A4 into isoaustinone which is in turn hydroxylated by the P450 monooxygenase ausI to form austinolide. The cytochrome P450 monooxygenase ausG modifies austinolide to austinol. Austinol is further acetylated to austin by the O-acetyltransferase ausP, which spontaneously changes to dehydroaustin. The cytochrome P450 monooxygenase ausR then converts dehydroaustin is into 7-dehydrodehydroaustin. The hydroxylation catalyzed by ausR permits the O-acetyltransferase ausQ to add an additional acetyl group to the molecule, leading to the formation of acetoxydehydroaustin. The short chain dehydrogenase ausT catalyzes the reduction of the double bond present between carbon atoms 1 and 2 to convert 7-dehydrodehydroaustin into 1,2-dihydro-7-hydroxydehydroaustin. AusQ catalyzes not only an acetylation reaction but also the addition of the PKS ausV diketide product to 1,2-dihydro-7-hydroxydehydroaustin, forming precalidodehydroaustin. Finally, the iron/alpha-ketoglutarate-dependent dioxygenase converts precalidodehydroaustin into calidodehydroaustin. The protein is Austinoid biosynthesis cluster protein H of Aspergillus calidoustus.